The sequence spans 356 residues: Histidinol-phosphate aminotransferase (356 aa).

Residue Lys-214 is modified to N6-(pyridoxal phosphate)lysine.

This sequence belongs to the class-II pyridoxal-phosphate-dependent aminotransferase family. Histidinol-phosphate aminotransferase subfamily. Homodimer. It depends on pyridoxal 5'-phosphate as a cofactor.

The catalysed reaction is L-histidinol phosphate + 2-oxoglutarate = 3-(imidazol-4-yl)-2-oxopropyl phosphate + L-glutamate. The protein operates within amino-acid biosynthesis; L-histidine biosynthesis; L-histidine from 5-phospho-alpha-D-ribose 1-diphosphate: step 7/9. The polypeptide is Histidinol-phosphate aminotransferase (Escherichia coli O8 (strain IAI1)).